Consider the following 490-residue polypeptide: Secretory immunoglobulin A-binding protein EsiB (490 aa).

The first 23 residues, 1–23 (MKKSLLAVMLTGLFALVSLPALG), serve as a signal peptide directing secretion. 11 Sel1-like repeats span residues 39–74 (AKAQ…EQGY), 77–109 (AEYV…ALKG), 111–145 (PQAQ…AEQG), 153–182 (MGDA…EQGN), 185–218 (SCNQ…TSGD), 222–254 (QLHL…EQGN), 256–290 (IAQF…EQGN), 291–327 (SDGQ…EQGD), 328–361 (ATAQ…AAKG), 364–397 (AAQF…AEQG), and 399–430 (SAAQ…DTAS). Histidine 122, glutamate 159, and aspartate 161 together coordinate Mg(2+).

As to quaternary structure, interacts with human secreted IgA (SIgA) at least via resides 244-260. Mg(2+) serves as cofactor.

It is found in the cell surface. Upon host (human neutrophil) infection interferes with productive FCAR signaling, inhibiting secreted IgA (SIgA) effector functions and probably avoiding neutrophil activation. Inhibits the SIgA-mediated oxidative burst by neutrophils, decreases generation of ROS (reactive oxygen species) by neutrophils and reduces chemotaxis by neutrophils, all of which are SIgA effector functions used to stimulate the immune response. Does not block SIgA-binding to its receptor (FCAR) on neutrophils, but it decreases SIgA-stimulated phosphorylation of cytoplasmic proteins, including phospholipase C-gamma and MAP kinases, all actions that may be advantageous to the pathogen. This is Secretory immunoglobulin A-binding protein EsiB from Escherichia coli O6:H1 (strain CFT073 / ATCC 700928 / UPEC).